The chain runs to 407 residues: Cytochrome P450 NovI (407 aa).

Cys-357 contributes to the heme binding site.

Belongs to the cytochrome P450 family. Heme serves as cofactor.

Its pathway is antibiotic biosynthesis; novobiocin biosynthesis. Together with NovH, involved in the formation of a beta-OH-Tyr intermediate in the novobiocin biosynthesis pathway, an aminocoumarin family antibiotic that targets bacterial DNA gyrases. Acts as a cytochrome P450-type monooxygenase with specificity for the tyrosyl-S-NovH acyl enzyme (L-Tyr-S-NovH) to form the beta-OH-Tyr intermediate (L-beta-OH-Tyr-S-NovH). In Streptomyces niveus (Streptomyces spheroides), this protein is Cytochrome P450 NovI (novI).